Reading from the N-terminus, the 368-residue chain is (Iso)eugenol O-methyltransferase (368 aa).

The propeptide occupies 1 to 2; sequence MG. Residues serine 187, 211–212, aspartate 234, 254–255, and lysine 268 each bind S-adenosyl-L-methionine; these read GG and DM. Histidine 272 functions as the Proton acceptor in the catalytic mechanism.

Belongs to the class I-like SAM-binding methyltransferase superfamily. Cation-independent O-methyltransferase family. COMT subfamily. Homodimer. Expressed in petals, style and stamens, but not in stigma, sepals, leaves or stem tissues.

The catalysed reaction is (E)-isoeugenol + S-adenosyl-L-methionine = (E)-isomethyleugenol + S-adenosyl-L-homocysteine + H(+). Its function is as follows. Catalyzes the methylation of the para-4-hydroxyl of both eugenol and (iso)eugenol to methyleugenol and isomethyleugenol, respectively. The resulting products are part of a complex mixture of low-molecular-weight volatile compounds emitted by the flowers to attract pollinators. The chain is (Iso)eugenol O-methyltransferase (IEMT1) from Clarkia breweri (Fairy fans).